A 1047-amino-acid polypeptide reads, in one-letter code: Atrial natriuretic peptide receptor 2 (1047 aa).

Residues M1–G16 form the signal peptide. Residues V17–I458 are Extracellular-facing. Residues N24 and N35 are each glycosylated (N-linked (GlcNAc...) asparagine). Residues C75 and C101 are joined by a disulfide bond. Residues N161, N195, N244, N277, and N349 are each glycosylated (N-linked (GlcNAc...) asparagine). The helical transmembrane segment at V459 to F478 threads the bilayer. The Cytoplasmic segment spans residues R479–L1047. Residue S513 is modified to Phosphoserine. A Protein kinase domain is found at S513–I786. T516 is subject to Phosphothreonine. Residues S518, S522, S523, and S526 each carry the phosphoserine modification. T529 carries the phosphothreonine modification. Positions T861–E991 constitute a Guanylate cyclase domain.

Belongs to the adenylyl cyclase class-4/guanylyl cyclase family. Post-translationally, phosphorylated. Phosphorylation of the protein kinase-like domain is required for full activation by CNP. In terms of processing, glycosylated. Widely expressed. Expressed in the columnar proliferating and prehypertrophic chondrocyte layers of the tibia.

Its subcellular location is the cell membrane. The enzyme catalyses GTP = 3',5'-cyclic GMP + diphosphate. Functionally, receptor for the C-type natriuretic peptide NPPC/CNP hormone. Has guanylate cyclase activity upon binding of its ligand. May play a role in the regulation of skeletal growth. The chain is Atrial natriuretic peptide receptor 2 (Npr2) from Mus musculus (Mouse).